The chain runs to 628 residues: Biosynthetic arginine decarboxylase (628 aa).

Lys99 bears the N6-(pyridoxal phosphate)lysine mark. 279–289 lines the substrate pocket; the sequence is VDVGGGLGIDY.

Belongs to the Orn/Lys/Arg decarboxylase class-II family. SpeA subfamily. The cofactor is Mg(2+). Requires pyridoxal 5'-phosphate as cofactor.

The catalysed reaction is L-arginine + H(+) = agmatine + CO2. Its pathway is amine and polyamine biosynthesis; agmatine biosynthesis; agmatine from L-arginine: step 1/1. Functionally, catalyzes the biosynthesis of agmatine from arginine. This chain is Biosynthetic arginine decarboxylase, found in Xylella fastidiosa (strain M23).